The sequence spans 417 residues: Multifunctional CCA protein (417 aa).

Gly-8 and Arg-11 together coordinate ATP. The CTP site is built by Gly-8 and Arg-11. Mg(2+)-binding residues include Asp-21 and Asp-23. ATP is bound by residues Arg-91, Arg-137, and Arg-140. The CTP site is built by Arg-91, Arg-137, and Arg-140. The 102-residue stretch at 225–326 (SGIHTLMTLQ…LNVLKKTDAF (102 aa)) folds into the HD domain.

This sequence belongs to the tRNA nucleotidyltransferase/poly(A) polymerase family. Bacterial CCA-adding enzyme type 1 subfamily. Monomer. Can also form homodimers and oligomers. Mg(2+) is required as a cofactor. The cofactor is Ni(2+).

The enzyme catalyses a tRNA precursor + 2 CTP + ATP = a tRNA with a 3' CCA end + 3 diphosphate. It catalyses the reaction a tRNA with a 3' CCA end + 2 CTP + ATP = a tRNA with a 3' CCACCA end + 3 diphosphate. Catalyzes the addition and repair of the essential 3'-terminal CCA sequence in tRNAs without using a nucleic acid template. Adds these three nucleotides in the order of C, C, and A to the tRNA nucleotide-73, using CTP and ATP as substrates and producing inorganic pyrophosphate. tRNA 3'-terminal CCA addition is required both for tRNA processing and repair. Also involved in tRNA surveillance by mediating tandem CCA addition to generate a CCACCA at the 3' terminus of unstable tRNAs. While stable tRNAs receive only 3'-terminal CCA, unstable tRNAs are marked with CCACCA and rapidly degraded. In Neisseria meningitidis serogroup C (strain 053442), this protein is Multifunctional CCA protein.